Reading from the N-terminus, the 199-residue chain is Imidazole glycerol phosphate synthase subunit HisH 2 (199 aa).

The Glutamine amidotransferase type-1 domain occupies 1-199; sequence MIAVIDVSGN…NNFLSLESTC (199 aa). The active-site Nucleophile is the Cys76. Residues His177 and Glu179 contribute to the active site.

As to quaternary structure, heterodimer of HisH and HisF.

Its subcellular location is the cytoplasm. The catalysed reaction is 5-[(5-phospho-1-deoxy-D-ribulos-1-ylimino)methylamino]-1-(5-phospho-beta-D-ribosyl)imidazole-4-carboxamide + L-glutamine = D-erythro-1-(imidazol-4-yl)glycerol 3-phosphate + 5-amino-1-(5-phospho-beta-D-ribosyl)imidazole-4-carboxamide + L-glutamate + H(+). It carries out the reaction L-glutamine + H2O = L-glutamate + NH4(+). It functions in the pathway amino-acid biosynthesis; L-histidine biosynthesis; L-histidine from 5-phospho-alpha-D-ribose 1-diphosphate: step 5/9. In terms of biological role, IGPS catalyzes the conversion of PRFAR and glutamine to IGP, AICAR and glutamate. The HisH subunit provides the glutamine amidotransferase activity that produces the ammonia necessary to HisF for the synthesis of IGP and AICAR. In Legionella pneumophila (strain Paris), this protein is Imidazole glycerol phosphate synthase subunit HisH 2.